The sequence spans 176 residues: NAD(P)H-quinone oxidoreductase subunit 6, chloroplastic (176 aa).

A run of 5 helical transmembrane segments spans residues 10 to 30 (ILML…VLLT), 33 to 53 (IYSA…YFLL), 60 to 80 (VAQL…AVMF), 95 to 115 (IGDG…MTTI), and 152 to 172 (FYLP…GAIT).

Belongs to the complex I subunit 6 family. NDH is composed of at least 16 different subunits, 5 of which are encoded in the nucleus.

The protein resides in the plastid. The protein localises to the chloroplast thylakoid membrane. The enzyme catalyses a plastoquinone + NADH + (n+1) H(+)(in) = a plastoquinol + NAD(+) + n H(+)(out). It carries out the reaction a plastoquinone + NADPH + (n+1) H(+)(in) = a plastoquinol + NADP(+) + n H(+)(out). Its function is as follows. NDH shuttles electrons from NAD(P)H:plastoquinone, via FMN and iron-sulfur (Fe-S) centers, to quinones in the photosynthetic chain and possibly in a chloroplast respiratory chain. The immediate electron acceptor for the enzyme in this species is believed to be plastoquinone. Couples the redox reaction to proton translocation, and thus conserves the redox energy in a proton gradient. The chain is NAD(P)H-quinone oxidoreductase subunit 6, chloroplastic (ndhG) from Hordeum vulgare (Barley).